Here is a 274-residue protein sequence, read N- to C-terminus: Large ribosomal subunit protein uL2 (274 aa).

Positions 224-256 (AMNPIDHPHGGGEGRTGEGRHAVDPWGNLTKGY) are disordered. Residues 229–246 (DHPHGGGEGRTGEGRHAV) show a composition bias toward basic and acidic residues.

The protein belongs to the universal ribosomal protein uL2 family. Part of the 50S ribosomal subunit. Forms a bridge to the 30S subunit in the 70S ribosome.

One of the primary rRNA binding proteins. Required for association of the 30S and 50S subunits to form the 70S ribosome, for tRNA binding and peptide bond formation. It has been suggested to have peptidyltransferase activity; this is somewhat controversial. Makes several contacts with the 16S rRNA in the 70S ribosome. This Acidovorax sp. (strain JS42) protein is Large ribosomal subunit protein uL2.